The primary structure comprises 217 residues: Peptide methionine sulfoxide reductase MsrA (217 aa).

The active site involves Cys56.

This sequence belongs to the MsrA Met sulfoxide reductase family.

It catalyses the reaction L-methionyl-[protein] + [thioredoxin]-disulfide + H2O = L-methionyl-(S)-S-oxide-[protein] + [thioredoxin]-dithiol. It carries out the reaction [thioredoxin]-disulfide + L-methionine + H2O = L-methionine (S)-S-oxide + [thioredoxin]-dithiol. Functionally, has an important function as a repair enzyme for proteins that have been inactivated by oxidation. Catalyzes the reversible oxidation-reduction of methionine sulfoxide in proteins to methionine. The protein is Peptide methionine sulfoxide reductase MsrA of Corynebacterium melassecola.